A 445-amino-acid chain; its full sequence is tRNA-2-methylthio-N(6)-dimethylallyladenosine synthase (445 aa).

One can recognise an MTTase N-terminal domain in the interval 2-122; sequence KKAFVKSYGC…LPDLLARSRE (121 aa). Cysteine 11, cysteine 47, cysteine 85, cysteine 157, cysteine 161, and cysteine 164 together coordinate [4Fe-4S] cluster. The 236-residue stretch at 143–378 folds into the Radical SAM core domain; the sequence is RTLGASAFLT…LDSQRHAYQR (236 aa). The TRAM domain occupies 378 to 440; sequence RAAAGRVFDV…SNSLFGELVS (63 aa).

It belongs to the methylthiotransferase family. MiaB subfamily. In terms of assembly, monomer. [4Fe-4S] cluster is required as a cofactor.

The protein localises to the cytoplasm. The catalysed reaction is N(6)-dimethylallyladenosine(37) in tRNA + (sulfur carrier)-SH + AH2 + 2 S-adenosyl-L-methionine = 2-methylsulfanyl-N(6)-dimethylallyladenosine(37) in tRNA + (sulfur carrier)-H + 5'-deoxyadenosine + L-methionine + A + S-adenosyl-L-homocysteine + 2 H(+). Functionally, catalyzes the methylthiolation of N6-(dimethylallyl)adenosine (i(6)A), leading to the formation of 2-methylthio-N6-(dimethylallyl)adenosine (ms(2)i(6)A) at position 37 in tRNAs that read codons beginning with uridine. In Methylobacterium radiotolerans (strain ATCC 27329 / DSM 1819 / JCM 2831 / NBRC 15690 / NCIMB 10815 / 0-1), this protein is tRNA-2-methylthio-N(6)-dimethylallyladenosine synthase.